Here is a 187-residue protein sequence, read N- to C-terminus: V-type ATP synthase subunit E (187 aa).

Belongs to the V-ATPase E subunit family.

Functionally, produces ATP from ADP in the presence of a proton gradient across the membrane. This Geotalea uraniireducens (strain Rf4) (Geobacter uraniireducens) protein is V-type ATP synthase subunit E.